The following is a 578-amino-acid chain: XK-related protein 6 (578 aa).

7 consecutive transmembrane segments (helical) span residues 86-106 (WIVL…WLAV), 114-134 (FLWS…VQIL), 253-273 (WLQC…LASY), 307-327 (VLSL…FVVL), 348-368 (WEEV…WFNV), 377-397 (MVAY…LWYA), and 410-430 (LALC…VLYY).

It belongs to the XK family.

The protein localises to the cell membrane. The chain is XK-related protein 6 (xkr6) from Tetraodon nigroviridis (Spotted green pufferfish).